Consider the following 616-residue polypeptide: Pentatricopeptide repeat-containing protein At4g15720 (616 aa).

PPR repeat units lie at residues 63 to 93, 94 to 128, 130 to 164, 165 to 199, 200 to 228, 235 to 269, 270 to 300, 301 to 335, 336 to 371, and 372 to 402; these read DTFT…MCEP, NVVS…RPVP, NEYT…GLRR, NIVV…GRNV, VSWT…FNAA, NQFM…GYES, NTVV…IRCH, SVIS…RINP, NYVT…GVVP, and DSRH…IEVG. The tract at residues 409–484 is type E motif; the sequence is LWGALLSAGR…ERACSWIENK (76 aa). The segment at 485–515 is type E(+) motif; that stretch reads DSVYVFHAGDLSCDESGEIERFLKDLEKRMK. The type DYW motif stretch occupies residues 522–616; the sequence is SSSMITTSSS…NGSCTCRDYW (95 aa).

This sequence belongs to the PPR family. PCMP-H subfamily.

In Arabidopsis thaliana (Mouse-ear cress), this protein is Pentatricopeptide repeat-containing protein At4g15720 (PCMP-H1).